The primary structure comprises 430 residues: Putative FBD-associated F-box protein At5g56440 (430 aa).

Residues 1–49 (MDRISLLPDDVVFKILSFVPTKVVVSTNLLSKRWRYLWKHVPKLDYRDP) enclose the F-box domain. Residues 349-399 (QWEQPSSVPKCLISSLETVEWIDYKGREVEKKVVMYLLENSRQLKTMAIRS) enclose the FBD domain.

This Arabidopsis thaliana (Mouse-ear cress) protein is Putative FBD-associated F-box protein At5g56440.